We begin with the raw amino-acid sequence, 554 residues long: 3-(3-hydroxy-phenyl)propionate/3-hydroxycinnamic acid hydroxylase (554 aa).

FAD contacts are provided by residues 17–46 and 285–295; these read QVAIAGAGPVGLMMANYLGQMGISVLLVEK and FRIDRVLLAGD.

Belongs to the PheA/TfdB FAD monooxygenase family. FAD serves as cofactor.

The enzyme catalyses 3-(3-hydroxyphenyl)propanoate + NADH + O2 + H(+) = 3-(2,3-dihydroxyphenyl)propanoate + NAD(+) + H2O. It catalyses the reaction (2E)-3-(3-hydroxyphenyl)prop-2-enoate + NADH + O2 + H(+) = (2E)-3-(2,3-dihydroxyphenyl)prop-2-enoate + NAD(+) + H2O. The protein operates within aromatic compound metabolism; 3-phenylpropanoate degradation. Functionally, catalyzes the insertion of one atom of molecular oxygen into position 2 of the phenyl ring of 3-(3-hydroxyphenyl)propionate (3-HPP) and hydroxycinnamic acid (3HCI). The chain is 3-(3-hydroxy-phenyl)propionate/3-hydroxycinnamic acid hydroxylase from Klebsiella pneumoniae (strain 342).